A 197-amino-acid chain; its full sequence is MKVYGLTGGIGSGKTTVRQLFEDEGVPTLDADQIAREVVAKNQPGLAEIERTFGSDYLTNGELNRAKLRELIFNDASAKQALEAILHPLIRQRTEQLIQQLKKQHPPAIVVEIPLLTETGKPNYVDEVIVLDLAPETQLKRAITRDQLPAEDIQKIIQQQATRAERLAVADIILNTEQPLETLRKDIQSLLHTHQNT.

A DPCK domain is found at 3–197 (VYGLTGGIGS…QSLLHTHQNT (195 aa)). Residue 11–16 (GSGKTT) coordinates ATP.

Belongs to the CoaE family.

The protein localises to the cytoplasm. The catalysed reaction is 3'-dephospho-CoA + ATP = ADP + CoA + H(+). It functions in the pathway cofactor biosynthesis; coenzyme A biosynthesis; CoA from (R)-pantothenate: step 5/5. Functionally, catalyzes the phosphorylation of the 3'-hydroxyl group of dephosphocoenzyme A to form coenzyme A. In Hydrogenovibrio crunogenus (strain DSM 25203 / XCL-2) (Thiomicrospira crunogena), this protein is Dephospho-CoA kinase.